Reading from the N-terminus, the 343-residue chain is tRNA N6-adenosine threonylcarbamoyltransferase (343 aa).

Residues His-116 and His-120 each coordinate Fe cation. Residues Thr-139–Gly-143, Asp-172, Gly-185, Asp-189, and Asn-280 contribute to the substrate site. Asp-308 is a Fe cation binding site.

This sequence belongs to the KAE1 / TsaD family. Requires Fe(2+) as cofactor.

Its subcellular location is the cytoplasm. It catalyses the reaction L-threonylcarbamoyladenylate + adenosine(37) in tRNA = N(6)-L-threonylcarbamoyladenosine(37) in tRNA + AMP + H(+). In terms of biological role, required for the formation of a threonylcarbamoyl group on adenosine at position 37 (t(6)A37) in tRNAs that read codons beginning with adenine. Is involved in the transfer of the threonylcarbamoyl moiety of threonylcarbamoyl-AMP (TC-AMP) to the N6 group of A37, together with TsaE and TsaB. TsaD likely plays a direct catalytic role in this reaction. The chain is tRNA N6-adenosine threonylcarbamoyltransferase from Cytophaga hutchinsonii (strain ATCC 33406 / DSM 1761 / CIP 103989 / NBRC 15051 / NCIMB 9469 / D465).